Reading from the N-terminus, the 164-residue chain is Interleukin-31 (164 aa).

Residues 1–23 (MASHSGPSTSVLFLFCCLGGWLA) form the signal peptide. N-linked (GlcNAc...) asparagine glycans are attached at residues asparagine 67 and asparagine 100.

Detected at low levels in testis, bone marrow, skeletal muscle, kidney, colon, thymus, small intestine and trachea.

Its subcellular location is the secreted. Activates STAT3 and possibly STAT1 and STAT5 through the IL31 heterodimeric receptor composed of IL31RA and OSMR. May function in skin immunity. Enhances myeloid progenitor cell survival in vitro. Induces RETNLA and serum amyloid A protein expression in macrophages. The protein is Interleukin-31 (IL31) of Homo sapiens (Human).